A 371-amino-acid polypeptide reads, in one-letter code: Bifunctional enzyme IspD/IspF (371 aa).

A 2-C-methyl-D-erythritol 4-phosphate cytidylyltransferase region spans residues Met-1 to Ile-210. Residues Phe-211–Leu-371 are 2-C-methyl-D-erythritol 2,4-cyclodiphosphate synthase. Asp-217 and His-219 together coordinate a divalent metal cation. 4-CDP-2-C-methyl-D-erythritol 2-phosphate is bound by residues Asp-217 to His-219 and His-243 to Ser-244. His-251 contributes to the a divalent metal cation binding site. 4-CDP-2-C-methyl-D-erythritol 2-phosphate contacts are provided by residues Asp-265–Gly-267, Phe-270–Asp-274, Thr-341–Glu-344, Phe-348, and Arg-351.

The protein in the N-terminal section; belongs to the IspD/TarI cytidylyltransferase family. IspD subfamily. This sequence in the C-terminal section; belongs to the IspF family. The cofactor is a divalent metal cation.

The enzyme catalyses 2-C-methyl-D-erythritol 4-phosphate + CTP + H(+) = 4-CDP-2-C-methyl-D-erythritol + diphosphate. It carries out the reaction 4-CDP-2-C-methyl-D-erythritol 2-phosphate = 2-C-methyl-D-erythritol 2,4-cyclic diphosphate + CMP. It participates in isoprenoid biosynthesis; isopentenyl diphosphate biosynthesis via DXP pathway; isopentenyl diphosphate from 1-deoxy-D-xylulose 5-phosphate: step 2/6. Its pathway is isoprenoid biosynthesis; isopentenyl diphosphate biosynthesis via DXP pathway; isopentenyl diphosphate from 1-deoxy-D-xylulose 5-phosphate: step 4/6. Functionally, bifunctional enzyme that catalyzes the formation of 4-diphosphocytidyl-2-C-methyl-D-erythritol from CTP and 2-C-methyl-D-erythritol 4-phosphate (MEP) (IspD), and catalyzes the conversion of 4-diphosphocytidyl-2-C-methyl-D-erythritol 2-phosphate (CDP-ME2P) to 2-C-methyl-D-erythritol 2,4-cyclodiphosphate (ME-CPP) with a corresponding release of cytidine 5-monophosphate (CMP) (IspF). The sequence is that of Bifunctional enzyme IspD/IspF from Campylobacter lari (strain RM2100 / D67 / ATCC BAA-1060).